The following is a 196-amino-acid chain: Crossover junction endodeoxyribonuclease RuvC (196 aa).

Residues aspartate 19, glutamate 80, and aspartate 153 contribute to the active site. Mg(2+)-binding residues include aspartate 19, glutamate 80, and aspartate 153.

This sequence belongs to the RuvC family. In terms of assembly, homodimer which binds Holliday junction (HJ) DNA. The HJ becomes 2-fold symmetrical on binding to RuvC with unstacked arms; it has a different conformation from HJ DNA in complex with RuvA. In the full resolvosome a probable DNA-RuvA(4)-RuvB(12)-RuvC(2) complex forms which resolves the HJ. Mg(2+) is required as a cofactor.

The protein resides in the cytoplasm. It carries out the reaction Endonucleolytic cleavage at a junction such as a reciprocal single-stranded crossover between two homologous DNA duplexes (Holliday junction).. Its function is as follows. The RuvA-RuvB-RuvC complex processes Holliday junction (HJ) DNA during genetic recombination and DNA repair. Endonuclease that resolves HJ intermediates. Cleaves cruciform DNA by making single-stranded nicks across the HJ at symmetrical positions within the homologous arms, yielding a 5'-phosphate and a 3'-hydroxyl group; requires a central core of homology in the junction. The consensus cleavage sequence is 5'-(A/T)TT(C/G)-3'. Cleavage occurs on the 3'-side of the TT dinucleotide at the point of strand exchange. HJ branch migration catalyzed by RuvA-RuvB allows RuvC to scan DNA until it finds its consensus sequence, where it cleaves and resolves the cruciform DNA. In Cutibacterium acnes (strain DSM 16379 / KPA171202) (Propionibacterium acnes), this protein is Crossover junction endodeoxyribonuclease RuvC.